The following is a 953-amino-acid chain: Communesin biosynthesis cluster-specific transcription factor cnsN (953 aa).

The disordered stretch occupies residues 371–418 (ELESTSPRTSHSSLSQDDTASLHSRSSLSSSPGRFPPSQKLVATSDSP). Over residues 374-408 (STSPRTSHSSLSQDDTASLHSRSSLSSSPGRFPPS) the composition is skewed to low complexity.

It localises to the nucleus. Its function is as follows. Transcriptional regulator; part of the gene cluster that mediates the biosynthesis of communesins, a prominent class of indole alkaloids with great potential as pharmaceuticals. The protein is Communesin biosynthesis cluster-specific transcription factor cnsN of Penicillium expansum (Blue mold rot fungus).